Here is a 458-residue protein sequence, read N- to C-terminus: Probable M18 family aminopeptidase 1 (458 aa).

The Zn(2+) site is built by histidine 95, histidine 170, and histidine 434.

The protein belongs to the peptidase M18 family. Requires Zn(2+) as cofactor.

The polypeptide is Probable M18 family aminopeptidase 1 (apeA) (Borreliella burgdorferi (strain ATCC 35210 / DSM 4680 / CIP 102532 / B31) (Borrelia burgdorferi)).